The chain runs to 122 residues: Large ribosomal subunit protein uL14 (122 aa).

Belongs to the universal ribosomal protein uL14 family. As to quaternary structure, part of the 50S ribosomal subunit. Forms a cluster with proteins L3 and L19. In the 70S ribosome, L14 and L19 interact and together make contacts with the 16S rRNA in bridges B5 and B8.

Binds to 23S rRNA. Forms part of two intersubunit bridges in the 70S ribosome. The sequence is that of Large ribosomal subunit protein uL14 from Thermosynechococcus vestitus (strain NIES-2133 / IAM M-273 / BP-1).